We begin with the raw amino-acid sequence, 201 residues long: Holliday junction branch migration complex subunit RuvA (201 aa).

A domain I region spans residues 1 to 64; that stretch reads MIGFIRGLLV…EDAHSLFGFG (64 aa). A domain II region spans residues 65–143; that stretch reads TEAERGLFRS…IGVPSLAPAS (79 aa). The interval 144 to 153 is flexible linker; the sequence is FAGGAAPLPA. The domain III stretch occupies residues 153–201; that stretch reads AADPADEAVSALIALGFKPQEANTLVARQAAEGRSAEDLIRAALQSAVR.

Belongs to the RuvA family. In terms of assembly, homotetramer. Forms an RuvA(8)-RuvB(12)-Holliday junction (HJ) complex. HJ DNA is sandwiched between 2 RuvA tetramers; dsDNA enters through RuvA and exits via RuvB. An RuvB hexamer assembles on each DNA strand where it exits the tetramer. Each RuvB hexamer is contacted by two RuvA subunits (via domain III) on 2 adjacent RuvB subunits; this complex drives branch migration. In the full resolvosome a probable DNA-RuvA(4)-RuvB(12)-RuvC(2) complex forms which resolves the HJ.

The protein localises to the cytoplasm. Its function is as follows. The RuvA-RuvB-RuvC complex processes Holliday junction (HJ) DNA during genetic recombination and DNA repair, while the RuvA-RuvB complex plays an important role in the rescue of blocked DNA replication forks via replication fork reversal (RFR). RuvA specifically binds to HJ cruciform DNA, conferring on it an open structure. The RuvB hexamer acts as an ATP-dependent pump, pulling dsDNA into and through the RuvAB complex. HJ branch migration allows RuvC to scan DNA until it finds its consensus sequence, where it cleaves and resolves the cruciform DNA. The polypeptide is Holliday junction branch migration complex subunit RuvA (Methylococcus capsulatus (strain ATCC 33009 / NCIMB 11132 / Bath)).